The sequence spans 346 residues: Prepilin peptidase EppA (346 aa).

Transmembrane regions (helical) follow at residues 1 to 21, 31 to 51, 56 to 76, 77 to 97, 101 to 121, 128 to 148, 149 to 169, 182 to 202, 206 to 226, and 321 to 341; these read MFGFDNLILGVYLFNFLLILT, IIPHFVIILMLIVNLPIGYYF, AITSFFATLILCLILGVGMGG, GDVKMFTALSPLFAAETIYFV, ISILIGLSALFAAIFPMTKIL, IIPSSAYLAMLIGIIVSITEI, YSIGNTKTILWSYIILSIFIS, LGYITPIYLIGFYLLNPAYFV, VLISFFVYIGQLSLISLVIYA, and PFVPFVLVAYCVITLLNMGVI.

This sequence belongs to the peptidase A24 family.

The protein resides in the cell membrane. In terms of biological role, peptidase that processes the N-terminus of prepilins. Specifically cleaves proteins with a class III (type IV pilin-like) signal sequence, such as the major structural pilin EpdE and the minor pilins EpdA, EpdC and EpdD. Is not able to cleave the preflagellin subunit FlaB2. The polypeptide is Prepilin peptidase EppA (Methanococcus maripaludis (strain DSM 14266 / JCM 13030 / NBRC 101832 / S2 / LL)).